Here is a 559-residue protein sequence, read N- to C-terminus: Dihydroxy-acid dehydratase (559 aa).

Residue D81 participates in Mg(2+) binding. Position 122 (C122) interacts with [2Fe-2S] cluster. The Mg(2+) site is built by D123 and K124. K124 bears the N6-carboxylysine mark. A [2Fe-2S] cluster-binding site is contributed by C195. E448 lines the Mg(2+) pocket. S474 functions as the Proton acceptor in the catalytic mechanism.

This sequence belongs to the IlvD/Edd family. As to quaternary structure, homodimer. [2Fe-2S] cluster is required as a cofactor. Requires Mg(2+) as cofactor.

It catalyses the reaction (2R)-2,3-dihydroxy-3-methylbutanoate = 3-methyl-2-oxobutanoate + H2O. The enzyme catalyses (2R,3R)-2,3-dihydroxy-3-methylpentanoate = (S)-3-methyl-2-oxopentanoate + H2O. It functions in the pathway amino-acid biosynthesis; L-isoleucine biosynthesis; L-isoleucine from 2-oxobutanoate: step 3/4. Its pathway is amino-acid biosynthesis; L-valine biosynthesis; L-valine from pyruvate: step 3/4. In terms of biological role, functions in the biosynthesis of branched-chain amino acids. Catalyzes the dehydration of (2R,3R)-2,3-dihydroxy-3-methylpentanoate (2,3-dihydroxy-3-methylvalerate) into 2-oxo-3-methylpentanoate (2-oxo-3-methylvalerate) and of (2R)-2,3-dihydroxy-3-methylbutanoate (2,3-dihydroxyisovalerate) into 2-oxo-3-methylbutanoate (2-oxoisovalerate), the penultimate precursor to L-isoleucine and L-valine, respectively. The protein is Dihydroxy-acid dehydratase of Geobacillus kaustophilus (strain HTA426).